The primary structure comprises 185 residues: Proton-translocating ferredoxin:NAD(+) oxidoreductase complex subunit G (185 aa).

A helical transmembrane segment spans residues 14-34 (TKNLTITCFISGIIIAAVYYI). Residue T161 is modified to FMN phosphoryl threonine.

Belongs to the RnfG family. In terms of assembly, the complex is composed of six subunits: RnfA, RnfB, RnfC, RnfD, RnfE and RnfG. The cofactor is FMN.

Its subcellular location is the cell membrane. Its function is as follows. Part of a membrane-bound complex that couples electron transfer with translocation of ions across the membrane. Couples electron transfer from reduced ferredoxin to NAD(+) with translocation of H(+) out of the cell. Essential for energy conservation during autotrophic growth. Contributes to ATP synthesis during heterotrophic growth. The polypeptide is Proton-translocating ferredoxin:NAD(+) oxidoreductase complex subunit G (Clostridium ljungdahlii (strain ATCC 55383 / DSM 13528 / PETC)).